Here is a 226-residue protein sequence, read N- to C-terminus: DQVTTPQVVNHVNSNNQAQQMAQKLDQDSIQLRNIKDNVQGTDYEKPVNEAITSVEKLKTSLRANSETVYDLNSIGSRVEALTDVIEAITFSTQHLANKVSQANIDMGFGITKLVIRILDPFASVDSIKAQVNDVKALEQKVLTYPDLKPTDRATIYTKSKLDKEIWNTRFTRDKKVLNVKEFKVYNTLNKAITHAVGVQLNPNVTVQQVDQEIVTLQAALQTALK.

Residues 37-100 form an igG constant region-binding region; it reads DNVQGTDYEK…FSTQHLANKV (64 aa). 3 consecutive repeats follow at residues 158–168, 169–179, and 180–190; these read TKSKLDKEIWN, TRFTRDKKVLN, and VKEFKVYNTLN.

The protein resides in the secreted. In terms of biological role, protein B belongs to the group of bacterial Fc-binding protein. This is Protein B from Streptococcus agalactiae.